The chain runs to 289 residues: MKLKTRLILSGTILISLAACYFLVLLVLDLEITRDLMTDYVDPRPLQTSYHKLCVIVPYRDRLEELREFSPHMSKFLHNQNVSHHILIINQTDPLRFNRASLINVGWNEADRLGCDYMVMNDVDLLPVNPEVPYDFPGIGVIRHITSPQYHPKYHYEKFIGGILMLTLKDYKKLNGMSNKYWGWGLEDDEFYLRIIDSKLNLTRVSGLSTDSSNTFRHIHGPKRKRDYTPKKNDKNQWEIKRKRDHVSGLHDVRYLIDSRQLLDFSGTSVTIINVALHCDLNWTPYCKS.

Topologically, residues 1 to 6 (MKLKTR) are cytoplasmic. The chain crosses the membrane as a helical; Signal-anchor for type II membrane protein span at residues 7-27 (LILSGTILISLAACYFLVLLV). Residues 28–289 (LDLEITRDLM…DLNWTPYCKS (262 aa)) lie on the Lumenal side of the membrane. 58–62 (PYRDR) contributes to the UDP-alpha-D-galactose binding site. N-linked (GlcNAc...) asparagine glycosylation is found at Asn81 and Asn90. Residues 97 to 99 (FNR), 123 to 124 (VD), Tyr154, and Trp184 each bind UDP-alpha-D-galactose. Position 124 (Asp124) interacts with Mn(2+). Position 186-189 (186-189 (LEDD)) interacts with N-acetyl-D-glucosamine. Asn201 carries an N-linked (GlcNAc...) asparagine glycan. Positions 214-236 (NTFRHIHGPKRKRDYTPKKNDKN) are disordered. Over residues 217–226 (RHIHGPKRKR) the composition is skewed to basic residues. His218 is a binding site for Mn(2+). 218–220 (HIH) contacts UDP-alpha-D-galactose. Residues 227-236 (DYTPKKNDKN) show a composition bias toward basic and acidic residues.

Belongs to the glycosyltransferase 7 family. Mn(2+) serves as cofactor.

Its subcellular location is the membrane. The catalysed reaction is 3-O-(beta-D-xylosyl)-L-seryl-[protein] + UDP-alpha-D-galactose = 3-O-(beta-D-galactosyl-(1-&gt;4)-beta-D-xylosyl)-L-seryl-[protein] + UDP + H(+). It participates in protein modification; protein glycosylation. Its function is as follows. Glycosyltransferase required for the biosynthesis of the tetrasaccharide (GlcA-Gal-Gal-Xyl-)Ser core linker of heparan sulfate and chondroitin sulfate. Required for embryonic development. Involved in vulval epithelium invagination. Required for axon regeneration after injury. In Caenorhabditis elegans, this protein is Xylosylprotein 4-beta-galactosyltransferase (sqv-3).